The primary structure comprises 301 residues: Protoheme IX farnesyltransferase (301 aa).

A run of 9 helical transmembrane segments spans residues 16–36, 41–61, 93–113, 114–134, 141–161, 172–192, 217–237, 238–258, and 273–293; these read VVAL…PGIP, IQSG…AAAI, VFAG…VNLI, TAVL…VYLK, IVIG…AVTG, SLLV…LAIF, QILL…ATGM, SGVF…WYAW, and FGYS…DHWL.

It belongs to the UbiA prenyltransferase family. Protoheme IX farnesyltransferase subfamily.

Its subcellular location is the cell inner membrane. The enzyme catalyses heme b + (2E,6E)-farnesyl diphosphate + H2O = Fe(II)-heme o + diphosphate. The protein operates within porphyrin-containing compound metabolism; heme O biosynthesis; heme O from protoheme: step 1/1. In terms of biological role, converts heme B (protoheme IX) to heme O by substitution of the vinyl group on carbon 2 of heme B porphyrin ring with a hydroxyethyl farnesyl side group. This is Protoheme IX farnesyltransferase from Xylella fastidiosa (strain 9a5c).